The primary structure comprises 372 residues: Queuine tRNA-ribosyltransferase (372 aa).

Asp-89 functions as the Proton acceptor in the catalytic mechanism. Substrate contacts are provided by residues 89-93 (DSGGF), Asp-143, Gln-185, and Gly-212. The RNA binding stretch occupies residues 243–249 (GVGKPED). The Nucleophile role is filled by Asp-262. The tract at residues 267–271 (TRNAR) is RNA binding; important for wobble base 34 recognition. Zn(2+) is bound by residues Cys-300, Cys-302, Cys-305, and His-331.

The protein belongs to the queuine tRNA-ribosyltransferase family. Homodimer. Within each dimer, one monomer is responsible for RNA recognition and catalysis, while the other monomer binds to the replacement base PreQ1. Zn(2+) serves as cofactor.

It carries out the reaction 7-aminomethyl-7-carbaguanine + guanosine(34) in tRNA = 7-aminomethyl-7-carbaguanosine(34) in tRNA + guanine. It functions in the pathway tRNA modification; tRNA-queuosine biosynthesis. Functionally, catalyzes the base-exchange of a guanine (G) residue with the queuine precursor 7-aminomethyl-7-deazaguanine (PreQ1) at position 34 (anticodon wobble position) in tRNAs with GU(N) anticodons (tRNA-Asp, -Asn, -His and -Tyr). Catalysis occurs through a double-displacement mechanism. The nucleophile active site attacks the C1' of nucleotide 34 to detach the guanine base from the RNA, forming a covalent enzyme-RNA intermediate. The proton acceptor active site deprotonates the incoming PreQ1, allowing a nucleophilic attack on the C1' of the ribose to form the product. After dissociation, two additional enzymatic reactions on the tRNA convert PreQ1 to queuine (Q), resulting in the hypermodified nucleoside queuosine (7-(((4,5-cis-dihydroxy-2-cyclopenten-1-yl)amino)methyl)-7-deazaguanosine). This Pseudomonas aeruginosa (strain LESB58) protein is Queuine tRNA-ribosyltransferase.